A 548-amino-acid polypeptide reads, in one-letter code: Probable malate:quinone oxidoreductase (548 aa).

The disordered stretch occupies residues 522 to 548 (KPQAADSTPKAQLKPQPARKEVADIAL). A compositionally biased stretch (basic and acidic residues) spans 539–548 (ARKEVADIAL).

The protein belongs to the MQO family. It depends on FAD as a cofactor.

The catalysed reaction is (S)-malate + a quinone = a quinol + oxaloacetate. It functions in the pathway carbohydrate metabolism; tricarboxylic acid cycle; oxaloacetate from (S)-malate (quinone route): step 1/1. The sequence is that of Probable malate:quinone oxidoreductase from Escherichia fergusonii (strain ATCC 35469 / DSM 13698 / CCUG 18766 / IAM 14443 / JCM 21226 / LMG 7866 / NBRC 102419 / NCTC 12128 / CDC 0568-73).